The sequence spans 361 residues: Phosphoserine aminotransferase (361 aa).

L-glutamate is bound at residue arginine 43. The pyridoxal 5'-phosphate site is built by tryptophan 103, threonine 153, aspartate 173, and glutamine 196. Residue lysine 197 is modified to N6-(pyridoxal phosphate)lysine. Residue 238 to 239 (NT) coordinates pyridoxal 5'-phosphate.

This sequence belongs to the class-V pyridoxal-phosphate-dependent aminotransferase family. SerC subfamily. Homodimer. It depends on pyridoxal 5'-phosphate as a cofactor.

It is found in the cytoplasm. The catalysed reaction is O-phospho-L-serine + 2-oxoglutarate = 3-phosphooxypyruvate + L-glutamate. It catalyses the reaction 4-(phosphooxy)-L-threonine + 2-oxoglutarate = (R)-3-hydroxy-2-oxo-4-phosphooxybutanoate + L-glutamate. It participates in amino-acid biosynthesis; L-serine biosynthesis; L-serine from 3-phospho-D-glycerate: step 2/3. Its pathway is cofactor biosynthesis; pyridoxine 5'-phosphate biosynthesis; pyridoxine 5'-phosphate from D-erythrose 4-phosphate: step 3/5. Its function is as follows. Catalyzes the reversible conversion of 3-phosphohydroxypyruvate to phosphoserine and of 3-hydroxy-2-oxo-4-phosphonooxybutanoate to phosphohydroxythreonine. This chain is Phosphoserine aminotransferase, found in Hahella chejuensis (strain KCTC 2396).